The primary structure comprises 269 residues: 5'-nucleotidase SurE (269 aa).

Residues aspartate 11, aspartate 12, serine 43, and asparagine 101 each contribute to the a divalent metal cation site.

The protein belongs to the SurE nucleotidase family. A divalent metal cation is required as a cofactor.

The protein localises to the cytoplasm. The catalysed reaction is a ribonucleoside 5'-phosphate + H2O = a ribonucleoside + phosphate. Its function is as follows. Nucleotidase that shows phosphatase activity on nucleoside 5'-monophosphates. The sequence is that of 5'-nucleotidase SurE from Prochlorococcus marinus (strain AS9601).